Reading from the N-terminus, the 234-residue chain is STARD3 N-terminal-like protein (234 aa).

Position 1 is an N-acetylmethionine (methionine 1). Topologically, residues 1–53 (MNHLPEDMENALTGSQSSHASLRNIHSINPTQLMARIESYEGREKKGISDVRR) are cytoplasmic. Serine 15, serine 21, and serine 27 each carry phosphoserine. The MENTAL domain occupies 48 to 218 (ISDVRRTFCL…YSPPESEAGS (171 aa)). The helical transmembrane segment at 54–74 (TFCLFVTFDLLFVTLLWIIEL) threads the bilayer. Residues 75-97 (NVNGGIENTLEKEVMQYDYYSSY) lie on the Extracellular side of the membrane. The helical transmembrane segment at 98-118 (FDIFLLAVFRFKVLILAYAVC) threads the bilayer. Topologically, residues 119 to 122 (RLRH) are cytoplasmic. The chain crosses the membrane as a helical span at residues 123–143 (WWAIALTTAVTSAFLLAKVIL). Residues 144 to 150 (SKLFSQG) lie on the Extracellular side of the membrane. A helical membrane pass occupies residues 151–171 (AFGYVLPIISFILAWIETWFL). At 172 to 234 (DFKVLPQEAE…QDSEKPLLEL (63 aa)) the chain is on the cytoplasmic side. At serine 193 the chain carries Phosphoserine. Positions 200–234 (PGGLSDGQFYSPPESEAGSEEAEEKQDSEKPLLEL) are disordered. The FFAT signature appears at 208 to 213 (FYSPPE). Over residues 224 to 234 (KQDSEKPLLEL) the composition is skewed to basic and acidic residues.

This sequence belongs to the STARD3 family. As to quaternary structure, homodimer. Interacts (via the MENTAL domain) with STARD3NL. Interacts (via FFAT motif) with VAPA. Interacts (via FFAT motif) with VAPB. Interacts (via FFAT motif) with MOSPD2 (via MSP domain).

Its subcellular location is the late endosome membrane. Functionally, tethering protein that creates contact site between the endoplasmic reticulum and late endosomes: localizes to late endosome membranes and contacts the endoplasmic reticulum via interaction with VAPA and VAPB. This chain is STARD3 N-terminal-like protein, found in Homo sapiens (Human).